The primary structure comprises 61 residues: Conotoxin Bt5.1 (61 aa).

Residues 1–22 (MRGLPVFVILLLLIASEPSVDA) form the signal peptide. The propeptide occupies 23–48 (RPKTKADVPLTSLNDNAKRTLQILRN).

The protein belongs to the conotoxin T superfamily. Contains 2 disulfide bonds that can be either 'C1-C3, C2-C4' or 'C1-C4, C2-C3', since these disulfide connectivities have been observed for conotoxins with cysteine framework V (for examples, see AC P0DQQ7 and AC P81755). Expressed by the venom duct.

It is found in the secreted. The protein is Conotoxin Bt5.1 of Conus betulinus (Beech cone).